Consider the following 524-residue polypeptide: Probable cytochrome P450 12c1, mitochondrial (524 aa).

Cys470 contributes to the heme binding site.

The protein belongs to the cytochrome P450 family. It depends on heme as a cofactor.

The protein resides in the mitochondrion membrane. The polypeptide is Probable cytochrome P450 12c1, mitochondrial (Cyp12c1) (Drosophila melanogaster (Fruit fly)).